An 80-amino-acid polypeptide reads, in one-letter code: Growth factor (80 aa).

The first 19 residues, 1–19 (MATRNLVASLLCIMYAVHA), serve as a signal peptide directing secretion. Positions 29-73 (HVKVCNHDYENYCLNNGTCFTIALDNVSITPFCVCRINYEGSRCQ) constitute an EGF-like domain. 3 disulfides stabilise this stretch: Cys-33–Cys-47, Cys-41–Cys-61, and Cys-63–Cys-72. Asn-44 and Asn-54 each carry an N-linked (GlcNAc...) asparagine; by host glycan.

It is found in the secreted. The protein is Growth factor of Oryctolagus cuniculus (Rabbit).